A 363-amino-acid chain; its full sequence is Pyrimidine monooxygenase RutA (363 aa).

Residues 49-50, asparagine 115, glutamate 124, 140-141, and serine 190 contribute to the FMN site; these read IK and RY.

The protein belongs to the NtaA/SnaA/DszA monooxygenase family. RutA subfamily.

The enzyme catalyses uracil + FMNH2 + NADH + O2 = (Z)-3-ureidoacrylate + FMN + NAD(+) + H2O + H(+). It carries out the reaction thymine + FMNH2 + NADH + O2 = (Z)-2-methylureidoacrylate + FMN + NAD(+) + H2O + H(+). Its function is as follows. Catalyzes the pyrimidine ring opening between N-3 and C-4 by an unusual flavin hydroperoxide-catalyzed mechanism, adding oxygen atoms in the process to yield ureidoacrylate peracid, that immediately reacts with FMN forming ureidoacrylate and FMN-N(5)-oxide. The FMN-N(5)-oxide reacts spontaneously with NADH to produce FMN. Requires the flavin reductase RutF to regenerate FMN in vivo. In Pantoea ananatis (strain LMG 20103), this protein is Pyrimidine monooxygenase RutA.